Reading from the N-terminus, the 600-residue chain is Elongation factor 4 (600 aa).

The region spanning 5–187 is the tr-type G domain; the sequence is KYIRNFSIIA…AIVNKLPPPK (183 aa). GTP contacts are provided by residues 17-22 and 134-137; these read DHGKST and NKID.

The protein belongs to the TRAFAC class translation factor GTPase superfamily. Classic translation factor GTPase family. LepA subfamily.

The protein localises to the cell inner membrane. The enzyme catalyses GTP + H2O = GDP + phosphate + H(+). Its function is as follows. Required for accurate and efficient protein synthesis under certain stress conditions. May act as a fidelity factor of the translation reaction, by catalyzing a one-codon backward translocation of tRNAs on improperly translocated ribosomes. Back-translocation proceeds from a post-translocation (POST) complex to a pre-translocation (PRE) complex, thus giving elongation factor G a second chance to translocate the tRNAs correctly. Binds to ribosomes in a GTP-dependent manner. The polypeptide is Elongation factor 4 (Rickettsia felis (strain ATCC VR-1525 / URRWXCal2) (Rickettsia azadi)).